We begin with the raw amino-acid sequence, 350 residues long: Ceramide synthase 1 (350 aa).

Position 2 is an N-acetylalanine (Ala2). 6 helical membrane-spanning segments follow: residues 53–73, 103–123, 148–168, 176–196, 239–259, and 287–307; these read AHLA…WTAL, AWKL…LLGT, IAVA…ATVY, SVVM…SYAF, VANL…LYWF, and LLLL…AFAA. Residues 97–311 form the TLC domain; it reads ARLPESAWKL…IVAFAAKVLT (215 aa).

In terms of processing, acetylated. Deacetylation by SIRT3 increases enzyme activity and promotes mitochondrial ceramide accumulation. In terms of tissue distribution, expressed in brain, skeletal muscle, heart and perigonadal white adipose tissue.

Its subcellular location is the endoplasmic reticulum membrane. The enzyme catalyses a sphingoid base + octadecanoyl-CoA = an N-octadecanoyl-sphingoid base + CoA + H(+). The catalysed reaction is sphinganine + octadecanoyl-CoA = N-(octadecanoyl)-sphinganine + CoA + H(+). It carries out the reaction hexadecasphinganine + octadecanoyl-CoA = N-octadecanoylhexadecasphinganine + CoA + H(+). It catalyses the reaction sphing-4-enine + octadecanoyl-CoA = N-octadecanoylsphing-4-enine + CoA + H(+). The enzyme catalyses heptadecasphing-4-enine + octadecanoyl-CoA = N-octadecanoyl-heptadecasphing-4-enine + CoA + H(+). The catalysed reaction is 2-hydroxyoctadecanoyl-CoA + sphinganine = N-(2-hydroxyoctadecanoyl)-sphinganine + CoA + H(+). It carries out the reaction eicosanoyl-CoA + sphinganine = N-eicosanoylsphinganine + CoA + H(+). It participates in lipid metabolism; sphingolipid metabolism. Inhibited by fumonisin B1. Its function is as follows. Ceramide synthase that catalyzes the transfer of the acyl chain from acyl-CoA to a sphingoid base, with high selectivity toward stearoyl-CoA (octadecanoyl-CoA; C18:0-CoA). N-acylates sphinganine and sphingosine bases to form dihydroceramides and ceramides in de novo synthesis and salvage pathways, respectively. Plays a predominant role in skeletal muscle in regulating C18 ceramide and dihydroceramide levels with an impact on whole-body glucose metabolism and insulin sensitivity. Protects from diet-induced obesity by suppressing the uptake of glucose in multiple organs in a FGF21-dependent way. Generates C18 ceramides in the brain, playing a critical role in cerebellar development and Purkinje cell function. In response to cellular stress mediates mitophagy, a known defense mechanism against cell transformation and aging. Upon mitochondria fission, generates C18 ceramides that anchor lipidated MAP1LC3B/LC3B-II autophagolysosomes to outer mitochondrial membranes to eliminate damaged mitochondria. This chain is Ceramide synthase 1, found in Mus musculus (Mouse).